The sequence spans 59 residues: MAKLKITLKKSTNKAVKSQAATVKALGLGKIGTTVEQNDNPQIRGMIRKVSHLVCVEEI.

It belongs to the universal ribosomal protein uL30 family. In terms of assembly, part of the 50S ribosomal subunit.

This Ruminiclostridium cellulolyticum (strain ATCC 35319 / DSM 5812 / JCM 6584 / H10) (Clostridium cellulolyticum) protein is Large ribosomal subunit protein uL30.